The chain runs to 419 residues: UDP-N-acetylglucosamine 1-carboxyvinyltransferase (419 aa).

22 to 23 (KN) lines the phosphoenolpyruvate pocket. Position 95 (R95) interacts with UDP-N-acetyl-alpha-D-glucosamine. Residue C119 is the Proton donor of the active site. C119 carries the post-translational modification 2-(S-cysteinyl)pyruvic acid O-phosphothioketal. UDP-N-acetyl-alpha-D-glucosamine is bound by residues 164–167 (KVSV), D308, and I330.

This sequence belongs to the EPSP synthase family. MurA subfamily.

The protein resides in the cytoplasm. It carries out the reaction phosphoenolpyruvate + UDP-N-acetyl-alpha-D-glucosamine = UDP-N-acetyl-3-O-(1-carboxyvinyl)-alpha-D-glucosamine + phosphate. It participates in cell wall biogenesis; peptidoglycan biosynthesis. Cell wall formation. Adds enolpyruvyl to UDP-N-acetylglucosamine. The chain is UDP-N-acetylglucosamine 1-carboxyvinyltransferase from Rickettsia felis (strain ATCC VR-1525 / URRWXCal2) (Rickettsia azadi).